The primary structure comprises 264 residues: Ribonuclease HII (264 aa).

The region spanning 33–224 is the RNase H type-2 domain; sequence GPVAGVDEVG…VRRVASGSNT (192 aa). A divalent metal cation is bound by residues Asp39, Glu40, and Asp133. Residues 222-264 are disordered; it reads SNTAEVADGQPDPRDGTAQTGEGRWSKSSHPATMRATGRAQGT.

This sequence belongs to the RNase HII family. Requires Mn(2+) as cofactor. Mg(2+) is required as a cofactor.

It is found in the cytoplasm. It catalyses the reaction Endonucleolytic cleavage to 5'-phosphomonoester.. In terms of biological role, endonuclease that specifically degrades the RNA of RNA-DNA hybrids. The sequence is that of Ribonuclease HII from Mycobacterium bovis (strain BCG / Pasteur 1173P2).